The chain runs to 1176 residues: Nitrite reductase [NAD(P)H] (1176 aa).

The segment at 1 to 23 (MANTSLDMASSTSPSPSPESTTT) is disordered. Low complexity predominate over residues 10 to 23 (SSTSPSPSPESTTT). 26–60 (KRIVVVGLGMVGIAFIEKLIKLDTQRQYEIVVIGE) is a binding site for FAD. 183 to 215 (STGVVVGGGLLGLEAAKALMDLQVFGRVVVIER) is an NAD(+) binding site. Cysteine 496, cysteine 498, cysteine 531, and cysteine 534 together coordinate [2Fe-2S] cluster. 4 residues coordinate [4Fe-4S] cluster: cysteine 717, cysteine 723, cysteine 757, and cysteine 761. Cysteine 761 contributes to the siroheme binding site. A Rieske; atypical domain is found at 942-1094 (SYFQGADDLP…VEERDDGMVY (153 aa)). 2 residues coordinate [2Fe-2S] cluster: cysteine 981 and histidine 983. Low complexity-rich tracts occupy residues 998–1008 (PSPSSCSSSAL) and 1030–1049 (PTSSATPATTASSSCTTNPS). The disordered stretch occupies residues 998 to 1051 (PSPSSCSSSALPPSPPSTPPRSSSPVTSPPQSPTSSATPATTASSSCTTNPSGP). [2Fe-2S] cluster is bound by residues cysteine 1058 and histidine 1061. Over residues 1124–1139 (LRELDELNKSKGVEGK) the composition is skewed to basic and acidic residues. A disordered region spans residues 1124-1157 (LRELDELNKSKGVEGKKGRRGRKPGASEAGKEVG).

This sequence belongs to the nitrite and sulfite reductase 4Fe-4S domain family. In terms of assembly, homodimer. Siroheme serves as cofactor. It depends on [4Fe-4S] cluster as a cofactor. FAD is required as a cofactor. Requires [2Fe-2S] cluster as cofactor.

It catalyses the reaction NH4(+) + 3 NADP(+) + 2 H2O = nitrite + 3 NADPH + 5 H(+). It carries out the reaction NH4(+) + 3 NAD(+) + 2 H2O = nitrite + 3 NADH + 5 H(+). It participates in nitrogen metabolism; nitrate reduction (assimilation). The protein is Nitrite reductase [NAD(P)H] (nit-6) of Neurospora crassa (strain ATCC 24698 / 74-OR23-1A / CBS 708.71 / DSM 1257 / FGSC 987).